The chain runs to 497 residues: Putative endothelial lipase (497 aa).

The first 23 residues, 1–23 (MRACPFLLLLLLPLLLSLGRIAA), serve as a signal peptide directing secretion. The cysteines at positions 73 and 86 are disulfide-linked. Residues asparagine 89 and asparagine 145 are each glycosylated (N-linked (GlcNAc...) asparagine). Serine 178 serves as the catalytic Nucleophile. Aspartate 202 acts as the Charge relay system in catalysis. Cysteine 262 and cysteine 282 are oxidised to a cystine. Histidine 284 (charge relay system) is an active-site residue. 2 cysteine pairs are disulfide-bonded: cysteine 307–cysteine 326 and cysteine 318–cysteine 321. 335-347 (KMRNKRNSKMYLK) contributes to the heparin binding site. In terms of domain architecture, PLAT spans 357-492 (FHYQLKIHVF…CLKMVKVEKH (136 aa)). N-linked (GlcNAc...) asparagine glycosylation is present at asparagine 403.

This sequence belongs to the AB hydrolase superfamily. Lipase family. Head to tail homodimer. In terms of tissue distribution, expressed by the venom gland.

It localises to the secreted. The enzyme catalyses a triacylglycerol + H2O = a diacylglycerol + a fatty acid + H(+). Its activity is regulated as follows. Inhibited by serum. Its function is as follows. Has phospholipase and triglyceride lipase activities. In Crotalus adamanteus (Eastern diamondback rattlesnake), this protein is Putative endothelial lipase.